Consider the following 664-residue polypeptide: Macoilin (664 aa).

Transmembrane regions (helical) follow at residues 28 to 48 (TFLY…DFVV), 75 to 95 (AFSV…LLFI), 120 to 140 (VCLP…AIRF), and 154 to 174 (FAAH…KSYV). The span at 253–265 (REKGKEKDKDAKK) shows a compositional bias: basic and acidic residues. Positions 253-274 (REKGKEKDKDAKKHNLGINNNN) are disordered. Ser-305 carries the phosphoserine modification. Positions 320-348 (KNYKNASGVVNSSPRSHSATNGSIPSSSS) are enriched in polar residues. The tract at residues 320-375 (KNYKNASGVVNSSPRSHSATNGSIPSSSSKNEKKQKCTSKSPSTHKDLMENCIPNN) is disordered. N-linked (GlcNAc...) asparagine glycosylation occurs at Asn-324. Ser-332 is subject to Phosphoserine. Residues Asn-340 and Asn-452 are each glycosylated (N-linked (GlcNAc...) asparagine). The interval 630 to 664 (TSPLSPVSPHYSSKFVETSPSGLDPNASVYQPLKK) is disordered. A phosphoserine mark is found at Ser-631 and Ser-634. Asn-655 carries N-linked (GlcNAc...) asparagine glycosylation.

This sequence belongs to the macoilin family.

The protein resides in the rough endoplasmic reticulum membrane. Its subcellular location is the nucleus membrane. In terms of biological role, plays a role in the regulation of neuronal activity. The chain is Macoilin (MACO1) from Pan troglodytes (Chimpanzee).